The chain runs to 622 residues: Chaperone protein HscA homolog (622 aa).

The protein belongs to the heat shock protein 70 family.

Functionally, chaperone involved in the maturation of iron-sulfur cluster-containing proteins. Has a low intrinsic ATPase activity which is markedly stimulated by HscB. In Burkholderia thailandensis (strain ATCC 700388 / DSM 13276 / CCUG 48851 / CIP 106301 / E264), this protein is Chaperone protein HscA homolog.